Here is a 760-residue protein sequence, read N- to C-terminus: Penicillin-binding protein 1B (760 aa).

Residues 1–8 (MFFNFKKY) lie on the Cytoplasmic side of the membrane. A helical; Signal-anchor for type II membrane protein membrane pass occupies residues 9–29 (FLIKVFFFVLILTLCYGLYLY). At 30 to 760 (VKINRFINGK…NFLFWLKNLF (731 aa)) the chain is on the extracellular side. The segment at 136 to 308 (FRLEPKLIAM…SLYSPWTNPN (173 aa)) is transglycosylase. Glu-174 (proton donor; for transglycosylase activity) is an active-site residue. Positions 392 to 684 (EQAVKIEIPI…SSGAMQIYKR (293 aa)) are transpeptidase. The active-site Acyl-ester intermediate; for transpeptidase activity is Ser-451.

In the N-terminal section; belongs to the glycosyltransferase 51 family. This sequence in the C-terminal section; belongs to the transpeptidase family.

The protein localises to the cell membrane. It catalyses the reaction [GlcNAc-(1-&gt;4)-Mur2Ac(oyl-L-Ala-gamma-D-Glu-L-Lys-D-Ala-D-Ala)](n)-di-trans,octa-cis-undecaprenyl diphosphate + beta-D-GlcNAc-(1-&gt;4)-Mur2Ac(oyl-L-Ala-gamma-D-Glu-L-Lys-D-Ala-D-Ala)-di-trans,octa-cis-undecaprenyl diphosphate = [GlcNAc-(1-&gt;4)-Mur2Ac(oyl-L-Ala-gamma-D-Glu-L-Lys-D-Ala-D-Ala)](n+1)-di-trans,octa-cis-undecaprenyl diphosphate + di-trans,octa-cis-undecaprenyl diphosphate + H(+). The catalysed reaction is Preferential cleavage: (Ac)2-L-Lys-D-Ala-|-D-Ala. Also transpeptidation of peptidyl-alanyl moieties that are N-acyl substituents of D-alanine.. It participates in cell wall biogenesis; peptidoglycan biosynthesis. Cell wall formation. Synthesis of cross-linked peptidoglycan from the lipid intermediates. The enzyme has a penicillin-insensitive transglycosylase N-terminal domain (formation of linear glycan strands) and a penicillin-sensitive transpeptidase C-terminal domain (cross-linking of the peptide subunits). The chain is Penicillin-binding protein 1B (mrcB) from Buchnera aphidicola subsp. Acyrthosiphon pisum (strain APS) (Acyrthosiphon pisum symbiotic bacterium).